The sequence spans 240 residues: Uridylate kinase (240 aa).

Residue 12 to 15 (KLSG) coordinates ATP. The tract at residues 20–25 (GKQGFG) is involved in allosteric activation by GTP. Gly-54 contributes to the UMP binding site. ATP contacts are provided by Gly-55 and Arg-59. Residues Asp-74 and 135–142 (TGNPYFST) each bind UMP. ATP-binding residues include Asn-163, Tyr-169, and Asp-172.

It belongs to the UMP kinase family. Homohexamer.

It localises to the cytoplasm. The enzyme catalyses UMP + ATP = UDP + ADP. It functions in the pathway pyrimidine metabolism; CTP biosynthesis via de novo pathway; UDP from UMP (UMPK route): step 1/1. Its activity is regulated as follows. Allosterically activated by GTP. Inhibited by UTP. Its function is as follows. Catalyzes the reversible phosphorylation of UMP to UDP. This is Uridylate kinase from Geobacillus kaustophilus (strain HTA426).